We begin with the raw amino-acid sequence, 376 residues long: DNA double-strand break repair protein Mre11 (376 aa).

Mn(2+)-binding residues include Asp5, His7, Asp46, and Asp81. His82 (proton donor) is an active-site residue. Residues His159, His189, and His191 each contribute to the Mn(2+) site.

Belongs to the MRE11/RAD32 family. As to quaternary structure, homodimer. Forms a heterotetramer composed of two Mre11 subunits and two Rad50 subunits. The cofactor is Mn(2+).

With respect to regulation, nuclease activity is regulated by Rad50. In terms of biological role, part of the Rad50/Mre11 complex, which is involved in the early steps of DNA double-strand break (DSB) repair. The complex may facilitate opening of the processed DNA ends to aid in the recruitment of HerA and NurA. Mre11 binds to DSB ends and has both double-stranded 3'-5' exonuclease activity and single-stranded endonuclease activity. This chain is DNA double-strand break repair protein Mre11, found in Thermoplasma acidophilum (strain ATCC 25905 / DSM 1728 / JCM 9062 / NBRC 15155 / AMRC-C165).